The following is a 428-amino-acid chain: NADH-ubiquinone oxidoreductase chain 2 (428 aa).

Helical transmembrane passes span 22–42 (IAFLSLLGYFVIMLNIWLHFG), 59–79 (LDESILSALLFILFLGLVIMN), 84–104 (LGWEFHLLLMGGLTGAIYMLT), 108–128 (LLLMVVGFEFLNLSTYLILSL), 140–160 (LLSSAFYTTLLLLAISFFYGL), 185–205 (ILLLGTIAFKLGLVPAHLWVP), 218–238 (WMGSVPKAAVLLWLPTIYPLL), 241–261 (LAPFLLVLSALSFLLSAVLMA), 269–289 (FLAYSAIGHLGFVVAAFAIGD), 292–312 (AYGYYIFIYMIATLAQFVLLS), 332–352 (LGLGFLVIVLTMASLPPFAGF), 356–376 (LLVLFGFLEIGYGIFAVLLIL), 384–404 (YYLKWIQTTFFSVVPFASAPI), and 408–428 (YPNLVSFLVTLILPSTLLLLL).

It belongs to the complex I subunit 2 family.

The protein localises to the mitochondrion inner membrane. The enzyme catalyses a ubiquinone + NADH + 5 H(+)(in) = a ubiquinol + NAD(+) + 4 H(+)(out). In terms of biological role, core subunit of the mitochondrial membrane respiratory chain NADH dehydrogenase (Complex I) that is believed to belong to the minimal assembly required for catalysis. Complex I functions in the transfer of electrons from NADH to the respiratory chain. The immediate electron acceptor for the enzyme is believed to be ubiquinone. The protein is NADH-ubiquinone oxidoreductase chain 2 of Hyaloraphidium curvatum (Lower fungus).